Here is a 392-residue protein sequence, read N- to C-terminus: Phosphoglycerate kinase (392 aa).

Substrate-binding positions include 21 to 23, Arg-36, 59 to 62, Arg-113, and Arg-146; these read DFN and HLGR. Residues Lys-197, Glu-319, and 345–348 contribute to the ATP site; that span reads GGDT.

It belongs to the phosphoglycerate kinase family. Monomer.

The protein localises to the cytoplasm. It catalyses the reaction (2R)-3-phosphoglycerate + ATP = (2R)-3-phospho-glyceroyl phosphate + ADP. It participates in carbohydrate degradation; glycolysis; pyruvate from D-glyceraldehyde 3-phosphate: step 2/5. The protein is Phosphoglycerate kinase of Francisella tularensis subsp. holarctica (strain FTNF002-00 / FTA).